The following is a 404-amino-acid chain: LL-diaminopimelate aminotransferase (404 aa).

Substrate-binding residues include Tyr-15 and Gly-42. Residues Tyr-72, 108–109 (AK), Tyr-132, Asn-188, Tyr-219, and 247–249 (SFS) contribute to the pyridoxal 5'-phosphate site. Substrate-binding residues include Lys-109, Tyr-132, and Asn-188. Lys-250 is subject to N6-(pyridoxal phosphate)lysine. Residues Arg-258 and Asn-288 each contribute to the pyridoxal 5'-phosphate site. Residues Asn-288 and Arg-384 each coordinate substrate.

The protein belongs to the class-I pyridoxal-phosphate-dependent aminotransferase family. LL-diaminopimelate aminotransferase subfamily. In terms of assembly, homodimer. Requires pyridoxal 5'-phosphate as cofactor.

The enzyme catalyses (2S,6S)-2,6-diaminopimelate + 2-oxoglutarate = (S)-2,3,4,5-tetrahydrodipicolinate + L-glutamate + H2O + H(+). Its pathway is amino-acid biosynthesis; L-lysine biosynthesis via DAP pathway; LL-2,6-diaminopimelate from (S)-tetrahydrodipicolinate (aminotransferase route): step 1/1. Its function is as follows. Involved in the synthesis of meso-diaminopimelate (m-DAP or DL-DAP), required for both lysine and peptidoglycan biosynthesis. Catalyzes the direct conversion of tetrahydrodipicolinate to LL-diaminopimelate. The protein is LL-diaminopimelate aminotransferase of Agathobacter rectalis (strain ATCC 33656 / DSM 3377 / JCM 17463 / KCTC 5835 / VPI 0990) (Eubacterium rectale).